A 623-amino-acid polypeptide reads, in one-letter code: Chaperone protein HtpG (623 aa).

An a; substrate-binding region spans residues 1-336 (MSMKGQETRG…SNDLPLNVSR (336 aa)). The b stretch occupies residues 337-551 (EILQDSRVTQ…ADEMSTQMAK (215 aa)). Residues 552-623 (LFAAAGQEAP…IRRMNKLLSA (72 aa)) are c.

The protein belongs to the heat shock protein 90 family. As to quaternary structure, homodimer.

Its subcellular location is the cytoplasm. Its function is as follows. Molecular chaperone. Has ATPase activity. The polypeptide is Chaperone protein HtpG (Serratia proteamaculans (strain 568)).